A 239-amino-acid chain; its full sequence is Aspartate/glutamate leucyltransferase (239 aa).

The protein belongs to the R-transferase family. Bpt subfamily.

It is found in the cytoplasm. The enzyme catalyses N-terminal L-glutamyl-[protein] + L-leucyl-tRNA(Leu) = N-terminal L-leucyl-L-glutamyl-[protein] + tRNA(Leu) + H(+). It catalyses the reaction N-terminal L-aspartyl-[protein] + L-leucyl-tRNA(Leu) = N-terminal L-leucyl-L-aspartyl-[protein] + tRNA(Leu) + H(+). In terms of biological role, functions in the N-end rule pathway of protein degradation where it conjugates Leu from its aminoacyl-tRNA to the N-termini of proteins containing an N-terminal aspartate or glutamate. The sequence is that of Aspartate/glutamate leucyltransferase from Campylobacter jejuni subsp. jejuni serotype O:23/36 (strain 81-176).